Reading from the N-terminus, the 221-residue chain is uncharacterized protein (221 aa).

In terms of domain architecture, CUE spans 20–63; sequence DFDRAMLDFQAMFPSLSNSHIEYVLRKYDGDVSATINELLYDNT. The disordered stretch occupies residues 131 to 194; that stretch reads EEKKKKSCSD…GPYIGEGEVK (64 aa). Residues 156–166 are compositionally biased toward low complexity; that stretch reads KNSKNSKISVN. The span at 169–183 shows a compositional bias: basic and acidic residues; it reads KKLEPRRRSDEDRVP.

This is an uncharacterized protein from Caenorhabditis elegans.